The chain runs to 308 residues: Cytochrome b (308 aa).

4 helical membrane-spanning segments follow: residues 1 to 21, 45 to 66, 81 to 101, and 146 to 166; these read FGSL…LLAT, WLIR…YLHI, WNTG…GYVL, and FFAL…IHFT. Residue histidine 65 coordinates heme b. Heme b contacts are provided by histidine 150 and histidine 164. Histidine 169 is a binding site for a ubiquinone. 3 helical membrane-spanning segments follow: residues 194 to 214, 256 to 276, and 288 to 308; these read VKDI…ALFS, LGGV…PFLH, and LSQF…WVGS.

The protein belongs to the cytochrome b family. The cytochrome bc1 complex contains 11 subunits: 3 respiratory subunits (MT-CYB, CYC1 and UQCRFS1), 2 core proteins (UQCRC1 and UQCRC2) and 6 low-molecular weight proteins (UQCRH/QCR6, UQCRB/QCR7, UQCRQ/QCR8, UQCR10/QCR9, UQCR11/QCR10 and a cleavage product of UQCRFS1). This cytochrome bc1 complex then forms a dimer. Requires heme b as cofactor.

It localises to the mitochondrion inner membrane. Its function is as follows. Component of the ubiquinol-cytochrome c reductase complex (complex III or cytochrome b-c1 complex) that is part of the mitochondrial respiratory chain. The b-c1 complex mediates electron transfer from ubiquinol to cytochrome c. Contributes to the generation of a proton gradient across the mitochondrial membrane that is then used for ATP synthesis. The sequence is that of Cytochrome b (MT-CYB) from Colaptes rupicola (Southern Andean flicker).